The sequence spans 502 residues: Lysine--tRNA ligase (502 aa).

2 residues coordinate Mg(2+): E413 and E420.

This sequence belongs to the class-II aminoacyl-tRNA synthetase family. As to quaternary structure, homodimer. Mg(2+) serves as cofactor.

The protein resides in the cytoplasm. It catalyses the reaction tRNA(Lys) + L-lysine + ATP = L-lysyl-tRNA(Lys) + AMP + diphosphate. The chain is Lysine--tRNA ligase from Haemophilus influenzae (strain PittGG).